The following is a 137-amino-acid chain: Thionin-like protein 1 (137 aa).

The signal sequence occupies residues 1–23; it reads MEDKRVAMLVVMMLVMGNMLIEA.

This sequence belongs to the plant thionin (TC 1.C.44) family. In terms of processing, is disulfide-linked.

The protein localises to the secreted. Its function is as follows. May be involved in plant defense. In Arabidopsis thaliana (Mouse-ear cress), this protein is Thionin-like protein 1.